The sequence spans 479 residues: Transmembrane protein 161A (479 aa).

An N-terminal signal peptide occupies residues 1–28 (MAVLGVQLVVTLLTATLMHRLAPHCSFA). At 29-98 (RWLLCNGSLF…LTTVDALVLR (70 aa)) the chain is on the extracellular side. N-linked (GlcNAc...) asparagine glycosylation is present at asparagine 34. Serine 69 bears the Phosphoserine mark. Residues 99–119 (FFLEYQWFVDFAVYSGGVYLF) form a helical membrane-spanning segment. The Cytoplasmic segment spans residues 120–134 (TEAYYYMLGPAKETN). A helical membrane pass occupies residues 135 to 155 (IAVFWCLLTVTFSIKMFLTVT). The Extracellular segment spans residues 156 to 166 (RLYFSAEEGGE). The chain crosses the membrane as a helical span at residues 167-187 (RSVCLTFAFLFLLLAMLVQVV). At 188-224 (REETLELGLEPGLASMTQNLEPLLKKQGWDWALPVAK) the chain is on the cytoplasmic side. Residues 225 to 245 (LAIRVGLAVVGSVLGAFLTFP) traverse the membrane as a helical segment. The Extracellular segment spans residues 246 to 263 (GLRLAQTHRDALTMSEDR). A helical membrane pass occupies residues 264-284 (PMLQFLLHTSFLSPLFILWLW). Residues 285-304 (TKPIARDFLHQPPFGETRFS) lie on the Cytoplasmic side of the membrane. Residues 305–325 (LLSDSAFDSGRLWLLVVLCLL) form a helical membrane-spanning segment. At 326–370 (RLAVTRPHLQAYLCLAKARVEQLRREAGRIEAREIQQRVVRVYCY) the chain is on the extracellular side. Residues 371–391 (VTVVSLQYLTPLILTLNCTLL) traverse the membrane as a helical segment. At 392–449 (LKTLGGYSWGLGPAPLLSPDPSSASAAPIGSGEDEVQQTAARIAGALGGLLTPLFLRG) the chain is on the cytoplasmic side. The helical transmembrane segment at 450–470 (VLAYLIWWTAACQLLASLFGL) threads the bilayer. At 471-479 (YFHQHLAGS) the chain is on the extracellular side.

Belongs to the TMEM161 family.

It is found in the membrane. In terms of biological role, may play a role in protection against oxidative stress. Overexpression leads to reduced levels of oxidant-induced DNA damage and apoptosis. The sequence is that of Transmembrane protein 161A (TMEM161A) from Homo sapiens (Human).